The sequence spans 85 residues: UPF0473 protein CLK_1946 (85 aa).

Belongs to the UPF0473 family.

This Clostridium botulinum (strain Loch Maree / Type A3) protein is UPF0473 protein CLK_1946.